Here is a 230-residue protein sequence, read N- to C-terminus: Stachydrine N-demethylase reductase subunit Stc3 (230 aa).

Belongs to the non-flavoprotein flavin reductase family. In terms of assembly, the system is probably composed of an oxygenase subunit (Stc2) and two reductase subunits (Stc3 and Stc4).

Functionally, reductase involved in the catabolism of stachydrine (L-proline betaine), a source of carbon and nitrogen. Part of a Rieske-type oxygenase system that catalyzes the demethylation of stachydrine to produce N-methyl-L-proline (monomethylproline). This subunit is probably involved in the transfer of electrons from NAD(P)H to the catalytic subunit Stc2. The chain is Stachydrine N-demethylase reductase subunit Stc3 from Rhizobium meliloti (strain 1021) (Ensifer meliloti).